Here is a 227-residue protein sequence, read N- to C-terminus: MATWSNLSLQDGASPLMEQLSFFHDHTMIDLLLITMIVGYSLSYMLLTKYTNRNMLHGHLIETIWTALPAITLIFIALPSLRLLYLLDDSSDAMITIKTIGRQWYWSYEYSDFINVEFDTYMTPENELNTDEFRLLEVDNRTTLPMNTEVRVLTSASDVLHSWAVPALVLKIDATPGRLNQGMFMINRPGLFFGQCSEICGANHSFMPIVIESTSIKLFIKWLSNMM.

The Mitochondrial intermembrane segment spans residues 1 to 26; that stretch reads MATWSNLSLQDGASPLMEQLSFFHDH. A helical membrane pass occupies residues 27 to 48; the sequence is TMIDLLLITMIVGYSLSYMLLT. Residues 49 to 62 are Mitochondrial matrix-facing; sequence KYTNRNMLHGHLIE. Residues 63–82 form a helical membrane-spanning segment; the sequence is TIWTALPAITLIFIALPSLR. Over 83 to 227 the chain is Mitochondrial intermembrane; the sequence is LLYLLDDSSD…LFIKWLSNMM (145 aa). Residues H161, C196, E198, C200, H204, and M207 each coordinate Cu cation. E198 is a binding site for Mg(2+).

The protein belongs to the cytochrome c oxidase subunit 2 family. In terms of assembly, component of the cytochrome c oxidase (complex IV, CIV), a multisubunit enzyme composed of a catalytic core of 3 subunits and several supernumerary subunits. The complex exists as a monomer or a dimer and forms supercomplexes (SCs) in the inner mitochondrial membrane with ubiquinol-cytochrome c oxidoreductase (cytochrome b-c1 complex, complex III, CIII). Requires Cu cation as cofactor.

Its subcellular location is the mitochondrion inner membrane. The catalysed reaction is 4 Fe(II)-[cytochrome c] + O2 + 8 H(+)(in) = 4 Fe(III)-[cytochrome c] + 2 H2O + 4 H(+)(out). Its function is as follows. Component of the cytochrome c oxidase, the last enzyme in the mitochondrial electron transport chain which drives oxidative phosphorylation. The respiratory chain contains 3 multisubunit complexes succinate dehydrogenase (complex II, CII), ubiquinol-cytochrome c oxidoreductase (cytochrome b-c1 complex, complex III, CIII) and cytochrome c oxidase (complex IV, CIV), that cooperate to transfer electrons derived from NADH and succinate to molecular oxygen, creating an electrochemical gradient over the inner membrane that drives transmembrane transport and the ATP synthase. Cytochrome c oxidase is the component of the respiratory chain that catalyzes the reduction of oxygen to water. Electrons originating from reduced cytochrome c in the intermembrane space (IMS) are transferred via the dinuclear copper A center (CU(A)) of subunit 2 and heme A of subunit 1 to the active site in subunit 1, a binuclear center (BNC) formed by heme A3 and copper B (CU(B)). The BNC reduces molecular oxygen to 2 water molecules using 4 electrons from cytochrome c in the IMS and 4 protons from the mitochondrial matrix. This is Cytochrome c oxidase subunit 2 (COII) from Locusta migratoria (Migratory locust).